The chain runs to 211 residues: Arginine exporter protein ArgO (211 aa).

6 helical membrane passes run methionine 1–proline 21, leucine 37–glycine 57, leucine 68–leucine 88, isoleucine 111–valine 131, tryptophan 147–alanine 167, and alanine 179–alanine 199.

It belongs to the LysE/ArgO transporter (TC 2.A.75) family.

It is found in the cell inner membrane. It catalyses the reaction L-arginine(in) = L-arginine(out). In terms of biological role, involved in the export of arginine. Important to control the intracellular level of arginine and the correct balance between arginine and lysine. The protein is Arginine exporter protein ArgO of Klebsiella pneumoniae subsp. pneumoniae (strain ATCC 700721 / MGH 78578).